We begin with the raw amino-acid sequence, 517 residues long: Serine hydroxymethyltransferase 1, mitochondrial (517 aa).

The transit peptide at 1–31 (MAMALALRRLSSSADKPLQRLFNGGHLYSMS) directs the protein to the mitochondrion. Residue K287 is modified to N6-(pyridoxal phosphate)lysine.

It belongs to the SHMT family. As to quaternary structure, homotetramer. It depends on pyridoxal 5'-phosphate as a cofactor.

It is found in the mitochondrion. It carries out the reaction (6R)-5,10-methylene-5,6,7,8-tetrahydrofolate + glycine + H2O = (6S)-5,6,7,8-tetrahydrofolate + L-serine. The protein operates within one-carbon metabolism; tetrahydrofolate interconversion. Its function is as follows. Catalyzes the interconversion of serine and glycine. This chain is Serine hydroxymethyltransferase 1, mitochondrial, found in Flaveria pringlei.